A 25-amino-acid polypeptide reads, in one-letter code: Small ribosomal subunit protein eS32B (25 aa).

A disordered region spans residues Met1–Lys25.

Belongs to the eukaryotic ribosomal protein eS32 family. Component of the small ribosomal subunit (SSU). Mature yeast ribosomes consist of a small (40S) and a large (60S) subunit. The 40S small subunit contains 1 molecule of ribosomal RNA (18S rRNA) and 33 different proteins (encoded by 57 genes). The large 60S subunit contains 3 rRNA molecules (25S, 5.8S and 5S rRNA) and 46 different proteins (encoded by 81 genes).

It localises to the cytoplasm. In terms of biological role, component of the ribosome, a large ribonucleoprotein complex responsible for the synthesis of proteins in the cell. The small ribosomal subunit (SSU) binds messenger RNAs (mRNAs) and translates the encoded message by selecting cognate aminoacyl-transfer RNA (tRNA) molecules. The large subunit (LSU) contains the ribosomal catalytic site termed the peptidyl transferase center (PTC), which catalyzes the formation of peptide bonds, thereby polymerizing the amino acids delivered by tRNAs into a polypeptide chain. The nascent polypeptides leave the ribosome through a tunnel in the LSU and interact with protein factors that function in enzymatic processing, targeting, and the membrane insertion of nascent chains at the exit of the ribosomal tunnel. This chain is Small ribosomal subunit protein eS32B, found in Saccharomyces cerevisiae (strain ATCC 204508 / S288c) (Baker's yeast).